The following is a 98-amino-acid chain: Small ribosomal subunit protein bS20 (98 aa).

A compositionally biased stretch (basic residues) spans 1–15 (MAPKKTTKKGGPKKR). A disordered region spans residues 1 to 21 (MAPKKTTKKGGPKKRPSAEKR).

Belongs to the bacterial ribosomal protein bS20 family.

Functionally, binds directly to 16S ribosomal RNA. This is Small ribosomal subunit protein bS20 from Chlamydia felis (strain Fe/C-56) (Chlamydophila felis).